Here is a 146-residue protein sequence, read N- to C-terminus: MVGSNFGIIYHNSAGGASSHGQSSGGGGGGDRDRTTPSSHLSDFMSQLEDYTPLIPDAVTSHYLNMGGFQSDDKRIVRLISLAAQKYMSDIIDDALQHSKARTHMQTTNTPGGSKAKDRKFTLTMEDLQPALADYGINVRKVDYSQ.

The segment at 16 to 43 (GASSHGQSSGGGGGGDRDRTTPSSHLSD) is disordered.

Belongs to the TAF10 family. As to quaternary structure, belongs to the TFIID complex which is composed of TATA binding protein (Tbp) and a number of TBP-associated factors (TAFs). The N-terminus interacts with the histone fold of Taf8. As to expression, at embryonic stage 9, expression is seen in the mesodermal layer and midgut primordia. The mesoderm-specific expression persists in later stages of development and at its highest level is detected in midgut, hindgut, and differentiating somatic muscle fibers. Coexpressed with Taf10 in the lateral epidermis and anal plate.

Its subcellular location is the cytoplasm. The protein resides in the nucleus. In terms of biological role, TFIID is a multimeric protein complex that plays a central role in mediating promoter responses to various activators and repressors. This Drosophila melanogaster (Fruit fly) protein is Transcription initiation factor TFIID subunit 10b.